Reading from the N-terminus, the 946-residue chain is Protein translocase subunit SecA (946 aa).

ATP-binding positions include Gln-87, 105-109 (GEGKT), and Asp-524. The segment at 905-926 (APASDAAQRDPKNPASWGKIGR) is disordered. Residues Cys-930, Cys-932, Cys-941, and His-942 each coordinate Zn(2+).

The protein belongs to the SecA family. As to quaternary structure, monomer and homodimer. Part of the essential Sec protein translocation apparatus which comprises SecA, SecYEG and auxiliary proteins SecDF-YajC and YidC. It depends on Zn(2+) as a cofactor.

It is found in the cell inner membrane. Its subcellular location is the cytoplasm. It carries out the reaction ATP + H2O + cellular proteinSide 1 = ADP + phosphate + cellular proteinSide 2.. Part of the Sec protein translocase complex. Interacts with the SecYEG preprotein conducting channel. Has a central role in coupling the hydrolysis of ATP to the transfer of proteins into and across the cell membrane, serving both as a receptor for the preprotein-SecB complex and as an ATP-driven molecular motor driving the stepwise translocation of polypeptide chains across the membrane. This Bradyrhizobium diazoefficiens (strain JCM 10833 / BCRC 13528 / IAM 13628 / NBRC 14792 / USDA 110) protein is Protein translocase subunit SecA.